A 370-amino-acid polypeptide reads, in one-letter code: UDP-N-acetylglucosamine--N-acetylmuramyl-(pentapeptide) pyrophosphoryl-undecaprenol N-acetylglucosamine transferase (370 aa).

Residues 10-12 (TGG), Asn126, Ser200, Ile255, and Gln300 contribute to the UDP-N-acetyl-alpha-D-glucosamine site.

The protein belongs to the glycosyltransferase 28 family. MurG subfamily.

Its subcellular location is the cell membrane. The catalysed reaction is Mur2Ac(oyl-L-Ala-gamma-D-Glu-L-Lys-D-Ala-D-Ala)-di-trans,octa-cis-undecaprenyl diphosphate + UDP-N-acetyl-alpha-D-glucosamine = beta-D-GlcNAc-(1-&gt;4)-Mur2Ac(oyl-L-Ala-gamma-D-Glu-L-Lys-D-Ala-D-Ala)-di-trans,octa-cis-undecaprenyl diphosphate + UDP + H(+). It functions in the pathway cell wall biogenesis; peptidoglycan biosynthesis. Functionally, cell wall formation. Catalyzes the transfer of a GlcNAc subunit on undecaprenyl-pyrophosphoryl-MurNAc-pentapeptide (lipid intermediate I) to form undecaprenyl-pyrophosphoryl-MurNAc-(pentapeptide)GlcNAc (lipid intermediate II). The protein is UDP-N-acetylglucosamine--N-acetylmuramyl-(pentapeptide) pyrophosphoryl-undecaprenol N-acetylglucosamine transferase of Lactobacillus delbrueckii subsp. bulgaricus (strain ATCC 11842 / DSM 20081 / BCRC 10696 / JCM 1002 / NBRC 13953 / NCIMB 11778 / NCTC 12712 / WDCM 00102 / Lb 14).